The following is a 236-amino-acid chain: Acetate--CoA ligase [ADP-forming] II subunit beta (236 aa).

One can recognise an ATP-grasp domain in the interval 26–62; that stretch reads KQVLKAYGLPVPEEKLAKTLDEALKYAEEIGYPVAMK. 52–63 contributes to the ATP binding site; that stretch reads AEEIGYPVAMKL.

Belongs to the acetate CoA ligase beta subunit family. Heterotetramer of two alpha and two beta subunits.

It carries out the reaction acetate + ATP + CoA = acetyl-CoA + ADP + phosphate. Catalyzes the reversible formation of acetate and ATP from acetyl-CoA by using ADP and phosphate. Can use other substrates such as phenylacetyl-CoA, indoleacetyl-CoA and isobutyryl-CoA, but not succinyl-CoA. Seems to be involved primarily in the degradation of aryl-CoA esters to the corresponding acids. Participates in the conversion of acetyl-CoA to acetate and in the degradation of branched-chain amino acids via branched-chain-acyl-CoA esters. The protein is Acetate--CoA ligase [ADP-forming] II subunit beta of Pyrococcus furiosus (strain ATCC 43587 / DSM 3638 / JCM 8422 / Vc1).